A 213-amino-acid chain; its full sequence is Nicotinamidase (213 aa).

Residue aspartate 10 is the Proton acceptor of the active site. Zn(2+) contacts are provided by aspartate 52, histidine 54, and histidine 86. Lysine 111 is an active-site residue. Cysteine 156 functions as the Nucleophile in the catalytic mechanism.

The protein belongs to the isochorismatase family.

It catalyses the reaction nicotinamide + H2O = nicotinate + NH4(+). The catalysed reaction is pyrazinamide + H2O = pyrazine-2-carboxylate + NH4(+). The protein operates within cofactor biosynthesis; nicotinate biosynthesis; nicotinate from nicotinamide: step 1/1. Catalyzes the deamidation of nicotinamide (NAM) into nicotinate. Likely functions in the cyclical salvage pathway for production of NAD from nicotinamide. Functionally, is also able to hydrolyze the first-line antituberculous drug pyrazinamide (PZA) into pyrazinoic acid in vitro, but this reaction is not considered to be physiologically relevant. This Escherichia coli (strain K12) protein is Nicotinamidase.